Reading from the N-terminus, the 138-residue chain is Phospholipase A2 homolog (138 aa).

The N-terminal stretch at 1 to 16 (MRALWIVAVWLIGVEG) is a signal peptide. Intrachain disulfides connect C42–C131, C44–C60, C59–C111, C65–C138, C66–C104, C73–C97, and C91–C102. The interval 121–133 (KKYTYYPNFLCKG) is important for membrane-damaging activities in eukaryotes and bacteria; heparin-binding.

Belongs to the phospholipase A2 family. Group II subfamily. S49 sub-subfamily. In terms of assembly, monomer. As to expression, expressed by the venom gland.

The protein resides in the secreted. Functionally, snake venom phospholipase A2 homolog that lacks enzymatic activity. Shows high myotoxin activities and displays edema-inducing activities. Has cytotoxic activities against HUVEC cells (LC(50)=5.0 uL) and human lung adenocarcinoma A549 cells (LC(50)=5.2 uL). This Echis ocellatus (Ocellated saw-scaled viper) protein is Phospholipase A2 homolog.